The chain runs to 345 residues: Phosphoribosylformylglycinamidine cyclo-ligase (345 aa).

The protein belongs to the AIR synthase family.

It localises to the cytoplasm. It catalyses the reaction 2-formamido-N(1)-(5-O-phospho-beta-D-ribosyl)acetamidine + ATP = 5-amino-1-(5-phospho-beta-D-ribosyl)imidazole + ADP + phosphate + H(+). The protein operates within purine metabolism; IMP biosynthesis via de novo pathway; 5-amino-1-(5-phospho-D-ribosyl)imidazole from N(2)-formyl-N(1)-(5-phospho-D-ribosyl)glycinamide: step 2/2. The chain is Phosphoribosylformylglycinamidine cyclo-ligase from Shewanella woodyi (strain ATCC 51908 / MS32).